A 193-amino-acid polypeptide reads, in one-letter code: Probable thymidylate kinase (193 aa).

Position 7-14 (7-14 (GIDGSGKT)) interacts with ATP.

This sequence belongs to the thymidylate kinase family.

It carries out the reaction dTMP + ATP = dTDP + ADP. This is Probable thymidylate kinase from Pyrobaculum calidifontis (strain DSM 21063 / JCM 11548 / VA1).